A 556-amino-acid chain; its full sequence is Dihydroxy-acid dehydratase (556 aa).

Asp78 lines the Mg(2+) pocket. Cys119 is a [2Fe-2S] cluster binding site. Residues Asp120 and Lys121 each coordinate Mg(2+). Lys121 carries the N6-carboxylysine modification. A [2Fe-2S] cluster-binding site is contributed by Cys191. Glu442 contacts Mg(2+). The Proton acceptor role is filled by Ser468.

This sequence belongs to the IlvD/Edd family. Homodimer. It depends on [2Fe-2S] cluster as a cofactor. Mg(2+) serves as cofactor.

It catalyses the reaction (2R)-2,3-dihydroxy-3-methylbutanoate = 3-methyl-2-oxobutanoate + H2O. The catalysed reaction is (2R,3R)-2,3-dihydroxy-3-methylpentanoate = (S)-3-methyl-2-oxopentanoate + H2O. It functions in the pathway amino-acid biosynthesis; L-isoleucine biosynthesis; L-isoleucine from 2-oxobutanoate: step 3/4. It participates in amino-acid biosynthesis; L-valine biosynthesis; L-valine from pyruvate: step 3/4. Its function is as follows. Functions in the biosynthesis of branched-chain amino acids. Catalyzes the dehydration of (2R,3R)-2,3-dihydroxy-3-methylpentanoate (2,3-dihydroxy-3-methylvalerate) into 2-oxo-3-methylpentanoate (2-oxo-3-methylvalerate) and of (2R)-2,3-dihydroxy-3-methylbutanoate (2,3-dihydroxyisovalerate) into 2-oxo-3-methylbutanoate (2-oxoisovalerate), the penultimate precursor to L-isoleucine and L-valine, respectively. In Clostridium kluyveri (strain NBRC 12016), this protein is Dihydroxy-acid dehydratase.